The chain runs to 190 residues: Molybdenum cofactor guanylyltransferase (190 aa).

GTP-binding positions include 10–12 (LAG), lysine 23, asparagine 51, aspartate 69, and aspartate 99. Aspartate 99 contributes to the Mg(2+) binding site.

This sequence belongs to the MobA family. As to quaternary structure, monomer. It depends on Mg(2+) as a cofactor.

It is found in the cytoplasm. It carries out the reaction Mo-molybdopterin + GTP + H(+) = Mo-molybdopterin guanine dinucleotide + diphosphate. Transfers a GMP moiety from GTP to Mo-molybdopterin (Mo-MPT) cofactor (Moco or molybdenum cofactor) to form Mo-molybdopterin guanine dinucleotide (Mo-MGD) cofactor. The polypeptide is Molybdenum cofactor guanylyltransferase (Mannheimia succiniciproducens (strain KCTC 0769BP / MBEL55E)).